The primary structure comprises 1054 residues: DIS3-like exonuclease 1 (1054 aa).

The 74-residue stretch at 236–309 folds into the CSD1 domain; it reads AGIKSGRYIQ…PKNEWKGRTV (74 aa). In terms of domain architecture, CSD2 spans 365–431; it reads ILVTPWDYRI…GEIATILVEN (67 aa). In terms of domain architecture, RNB spans 465–816; it reads RKDLRKSHLV…VHRLLMAAIS (352 aa). The residue at position 989 (Ser989) is a Phosphoserine.

The protein belongs to the RNR ribonuclease family. In terms of assembly, component of the RNA exosome complex. The catalytically inactive RNA exosome core (Exo-9) complex is believed to associate with catalytic subunits EXOSC10, and DIS3 or DIS3L in cytoplasmic- and nuclear-specific RNA exosome complex forms. It depends on Mg(2+) as a cofactor.

Its subcellular location is the cytoplasm. The enzyme catalyses Exonucleolytic cleavage in the 3'- to 5'-direction to yield nucleoside 5'-phosphates.. Catalytic component of the RNA exosome complex which has 3'-&gt;5' exoribonuclease activity and participates in a multitude of cellular RNA processing and degradation events. In the cytoplasm, the RNA exosome complex is involved in general mRNA turnover and specifically degrades inherently unstable mRNAs containing AU-rich elements (AREs) within their 3' untranslated regions, and in RNA surveillance pathways, preventing translation of aberrant mRNAs. It seems to be involved in degradation of histone mRNA. The sequence is that of DIS3-like exonuclease 1 (DIS3L) from Homo sapiens (Human).